A 183-amino-acid chain; its full sequence is Ras-related protein Rap-2a (183 aa).

10–17 (GSGGVGKS) contacts GTP. An Effector region motif is present at residues 32-40 (YDPTIEDFY). GTP-binding positions include 57–61 (DTAGT) and 116–119 (NKVD). S-palmitoyl cysteine attachment occurs at residues C176 and C177. The residue at position 180 (C180) is a Cysteine methyl ester. The S-farnesyl cysteine moiety is linked to residue C180. A propeptide spans 181–183 (VIL) (removed in mature form).

Belongs to the small GTPase superfamily. Ras family. As to quaternary structure, interacts (GTP-bound form) with RUNDC3A. Interacts with PLCE1. Interacts with ARHGAP29, SGSM1, SGSM2 and SGSM3. Interacts (GTP-bound form preferentially) with TNIK (via the CNH domain); the interaction is direct and recruits RAP2A to the E3 ubiquitin ligase NEDD4. Interacts with MINK1. Interacts (GTP-bound form preferentially) with MAP4K4. Interacts with cytoskeletal actin. Interacts with RGS14; the interaction is GTP-dependent. Post-translationally, ubiquitinated; undergoes 'Lys-63' monoubiquitination and diubiquitination by NEDD4. Multiple lysine residues are probably modified. Ubiquitination requires TNIK, prevents interaction with effectors and inactivates RAP2A. Ubiquitination by the ECS(RAB40B) complex leads to RAP2A localization to lamellipodia plasma membrane, activation, and regulation of sorting at early endosomes for recycling to the lamellipodia plasma membrane. Palmitoylated. Palmitoylation is required for association with recycling endosome membranes and activation of TNIK.

It localises to the midbody. The protein resides in the cell projection. Its subcellular location is the lamellipodium membrane. The protein localises to the golgi apparatus. It is found in the recycling endosome membrane. It localises to the lysosome. It catalyses the reaction GTP + H2O = GDP + phosphate + H(+). Activated by the guanine nucleotide-exchange factors RAPGEF3 and RAPGEF4 in a cAMP-dependent manner. Nucleotide exchange is also specifically stimulated by RAPGEF5, RASGEF1A and RASGEF1B. Small GTP-binding protein which cycles between a GDP-bound inactive and a GTP-bound active form. In its active form interacts with and regulates several effectors including MAP4K4, MINK1 and TNIK. Part of a signaling complex composed of NEDD4, RAP2A and TNIK which regulates neuronal dendrite extension and arborization during development. More generally, it is part of several signaling cascades and may regulate cytoskeletal rearrangements, cell migration, cell adhesion and cell spreading. The polypeptide is Ras-related protein Rap-2a (RAP2A) (Sus scrofa (Pig)).